A 1071-amino-acid chain; its full sequence is Carbamoyl phosphate synthase large chain (1071 aa).

The interval 1 to 403 (MPKRTDLKSI…SFQKALRGLE (403 aa)) is carboxyphosphate synthetic domain. The 196-residue stretch at 133 to 328 (KEAMEKIGLS…IAKVAANWAV (196 aa)) folds into the ATP-grasp 1 domain. Positions 169, 175, 176, 208, 210, 215, 241, 242, 243, 285, and 299 each coordinate ATP. Residues Gln285, Glu299, and Asn301 each contribute to the Mg(2+) site. Residues Gln285, Glu299, and Asn301 each contribute to the Mn(2+) site. An oligomerization domain region spans residues 404-548 (TGLCGFNPAR…YSTYEEECES (145 aa)). Residues 549-930 (RPSDRKKVMI…AYYKAQLGAG (382 aa)) form a carbamoyl phosphate synthetic domain region. The ATP-grasp 2 domain maps to 673–864 (QKVLNDLGLR…LAKVGARCMA (192 aa)). Positions 709, 748, 750, 755, 780, 781, 782, 783, 823, and 835 each coordinate ATP. Residues Gln823, Glu835, and Asn837 each contribute to the Mg(2+) site. Residues Gln823, Glu835, and Asn837 each contribute to the Mn(2+) site. Residues 931 to 1071 (ERLNPTGKIF…ELHGRLKNRN (141 aa)) enclose the MGS-like domain. Positions 931 to 1071 (ERLNPTGKIF…ELHGRLKNRN (141 aa)) are allosteric domain.

The protein belongs to the CarB family. Composed of two chains; the small (or glutamine) chain promotes the hydrolysis of glutamine to ammonia, which is used by the large (or ammonia) chain to synthesize carbamoyl phosphate. Tetramer of heterodimers (alpha,beta)4. Mg(2+) is required as a cofactor. Requires Mn(2+) as cofactor.

The enzyme catalyses hydrogencarbonate + L-glutamine + 2 ATP + H2O = carbamoyl phosphate + L-glutamate + 2 ADP + phosphate + 2 H(+). It catalyses the reaction hydrogencarbonate + NH4(+) + 2 ATP = carbamoyl phosphate + 2 ADP + phosphate + 2 H(+). It participates in amino-acid biosynthesis; L-arginine biosynthesis; carbamoyl phosphate from bicarbonate: step 1/1. It functions in the pathway pyrimidine metabolism; UMP biosynthesis via de novo pathway; (S)-dihydroorotate from bicarbonate: step 1/3. Functionally, large subunit of the glutamine-dependent carbamoyl phosphate synthetase (CPSase). CPSase catalyzes the formation of carbamoyl phosphate from the ammonia moiety of glutamine, carbonate, and phosphate donated by ATP, constituting the first step of 2 biosynthetic pathways, one leading to arginine and/or urea and the other to pyrimidine nucleotides. The large subunit (synthetase) binds the substrates ammonia (free or transferred from glutamine from the small subunit), hydrogencarbonate and ATP and carries out an ATP-coupled ligase reaction, activating hydrogencarbonate by forming carboxy phosphate which reacts with ammonia to form carbamoyl phosphate. This Neisseria gonorrhoeae protein is Carbamoyl phosphate synthase large chain.